Consider the following 520-residue polypeptide: Acetylcholine receptor subunit delta (520 aa).

The first 24 residues, 1 to 24 (MAGPVLTLGLLAALVVCALPGSWG), serve as a signal peptide directing secretion. At 25 to 248 (LNEEQRLIQH…VTFYLIIRRK (224 aa)) the chain is on the extracellular side. N100, N167, and N193 each carry an N-linked (GlcNAc...) asparagine glycan. A disulfide bridge links C154 with C168. 3 helical membrane passes run 249-273 (PLFY…VFYL), 281-299 (TSVA…LLIS), and 315-336 (FLLF…VLNI). The Cytoplasmic segment spans residues 337–474 (HFRTPSTHVL…WNQVARTVDR (138 aa)). Position 393 is a phosphotyrosine; by Tyr-kinases (Y393). A helical membrane pass occupies residues 475-493 (LCLFVVTPVMVVGTAWIFL).

It belongs to the ligand-gated ion channel (TC 1.A.9) family. Acetylcholine receptor (TC 1.A.9.1) subfamily. Delta/CHRND sub-subfamily. In terms of assembly, pentamer of two alpha chains, and one each of the beta, delta, and gamma (in immature muscle) or epsilon (in mature muscle) chains. The muscle heteropentamer composed of alpha-1, beta-1, delta, epsilon subunits interacts with the alpha-conotoxin ImII.

Its subcellular location is the postsynaptic cell membrane. The protein localises to the cell membrane. The enzyme catalyses K(+)(in) = K(+)(out). It catalyses the reaction Na(+)(in) = Na(+)(out). Functionally, after binding acetylcholine, the AChR responds by an extensive change in conformation that affects all subunits and leads to opening of an ion-conducting channel across the plasma membrane. The polypeptide is Acetylcholine receptor subunit delta (Chrnd) (Mus musculus (Mouse)).